Reading from the N-terminus, the 198-residue chain is Segregation and condensation protein B (198 aa).

This sequence belongs to the ScpB family. As to quaternary structure, homodimer. Homodimerization may be required to stabilize the binding of ScpA to the Smc head domains. Component of a cohesin-like complex composed of ScpA, ScpB and the Smc homodimer, in which ScpA and ScpB bind to the head domain of Smc. The presence of the three proteins is required for the association of the complex with DNA.

The protein localises to the cytoplasm. Participates in chromosomal partition during cell division. May act via the formation of a condensin-like complex containing Smc and ScpA that pull DNA away from mid-cell into both cell halves. In Acetivibrio thermocellus (strain ATCC 27405 / DSM 1237 / JCM 9322 / NBRC 103400 / NCIMB 10682 / NRRL B-4536 / VPI 7372) (Clostridium thermocellum), this protein is Segregation and condensation protein B.